The chain runs to 134 residues: MARVKRGVTSHAKHKKTLKAAKGFYGRRKNTIRAAKAAVDRSKQFAYRDRKVNKRNFRALWIQRINAAVREFGLTYGRFIDGLNKAGIEVDRKVLSDMAIHEPAAFGALVEASKKALAYLKEAGTANEFESAVR.

It belongs to the bacterial ribosomal protein bL20 family.

In terms of biological role, binds directly to 23S ribosomal RNA and is necessary for the in vitro assembly process of the 50S ribosomal subunit. It is not involved in the protein synthesizing functions of that subunit. The chain is Large ribosomal subunit protein bL20 from Rhizobium meliloti (strain 1021) (Ensifer meliloti).